We begin with the raw amino-acid sequence, 754 residues long: Phosphoribosylformylglycinamidine synthase subunit PurL (754 aa).

Residue histidine 54 is part of the active site. Residues tyrosine 57 and lysine 101 each coordinate ATP. Glutamate 103 contacts Mg(2+). Substrate-binding positions include serine 104 to histidine 107 and arginine 126. The active-site Proton acceptor is the histidine 105. Position 127 (aspartate 127) interacts with Mg(2+). Glutamine 252 serves as a coordination point for substrate. Aspartate 280 lines the Mg(2+) pocket. Residue glutamate 324–glutamine 326 coordinates substrate. The interval proline 386–proline 412 is disordered. ATP contacts are provided by asparagine 512 and glycine 549. A Mg(2+)-binding site is contributed by asparagine 550. Residue serine 552 coordinates substrate.

Belongs to the FGAMS family. Monomer. Part of the FGAM synthase complex composed of 1 PurL, 1 PurQ and 2 PurS subunits.

It is found in the cytoplasm. It carries out the reaction N(2)-formyl-N(1)-(5-phospho-beta-D-ribosyl)glycinamide + L-glutamine + ATP + H2O = 2-formamido-N(1)-(5-O-phospho-beta-D-ribosyl)acetamidine + L-glutamate + ADP + phosphate + H(+). It participates in purine metabolism; IMP biosynthesis via de novo pathway; 5-amino-1-(5-phospho-D-ribosyl)imidazole from N(2)-formyl-N(1)-(5-phospho-D-ribosyl)glycinamide: step 1/2. In terms of biological role, part of the phosphoribosylformylglycinamidine synthase complex involved in the purines biosynthetic pathway. Catalyzes the ATP-dependent conversion of formylglycinamide ribonucleotide (FGAR) and glutamine to yield formylglycinamidine ribonucleotide (FGAM) and glutamate. The FGAM synthase complex is composed of three subunits. PurQ produces an ammonia molecule by converting glutamine to glutamate. PurL transfers the ammonia molecule to FGAR to form FGAM in an ATP-dependent manner. PurS interacts with PurQ and PurL and is thought to assist in the transfer of the ammonia molecule from PurQ to PurL. The protein is Phosphoribosylformylglycinamidine synthase subunit PurL of Mycobacterium leprae (strain Br4923).